An 88-amino-acid chain; its full sequence is Large ribosomal subunit protein bL31B (88 aa).

The protein belongs to the bacterial ribosomal protein bL31 family. Type B subfamily. In terms of assembly, part of the 50S ribosomal subunit.

The sequence is that of Large ribosomal subunit protein bL31B from Corynebacterium diphtheriae (strain ATCC 700971 / NCTC 13129 / Biotype gravis).